The sequence spans 255 residues: 5-oxoprolinase subunit A (255 aa).

It belongs to the LamB/PxpA family. Forms a complex composed of PxpA, PxpB and PxpC.

It catalyses the reaction 5-oxo-L-proline + ATP + 2 H2O = L-glutamate + ADP + phosphate + H(+). Its function is as follows. Catalyzes the cleavage of 5-oxoproline to form L-glutamate coupled to the hydrolysis of ATP to ADP and inorganic phosphate. In Nitrobacter winogradskyi (strain ATCC 25391 / DSM 10237 / CIP 104748 / NCIMB 11846 / Nb-255), this protein is 5-oxoprolinase subunit A.